The sequence spans 108 residues: Latartoxin-2c (108 aa).

Positions 1–19 are cleaved as a signal peptide; that stretch reads MKVLVITALCFILLQNVLG. A propeptide spans 20 to 42 (removed in mature form); it reads EDTYEDLQNYIENLINENQDEAR. The Processing quadruplet motif signature appears at 39-42; sequence DEAR. 4 disulfides stabilise this stretch: Cys44–Cys61, Cys51–Cys72, Cys60–Cys84, and Cys74–Cys82. Residue Ile107 is modified to Isoleucine amide.

Belongs to the neurotoxin 19 (CSTX) family. 11 (latartoxin) subfamily. In terms of processing, contains 4 disulfide bonds. Cleavage of the propeptide depends on the processing quadruplet motif (XXXR, with at least one of X being E). In terms of tissue distribution, expressed by the venom gland.

Its subcellular location is the secreted. Insect toxin. The sequence is that of Latartoxin-2c from Lachesana tarabaevi (Spider).